The chain runs to 68 residues: Small integral membrane protein 10-like protein 3 (68 aa).

Expressed specifically in salivary glands (at protein level).

This is Small integral membrane protein 10-like protein 3 from Mus musculus (Mouse).